A 166-amino-acid polypeptide reads, in one-letter code: Mitochondrial inner membrane protease subunit 1 (166 aa).

Residues Ser40 and Lys83 contribute to the active site.

Belongs to the peptidase S26 family. IMP1 subfamily. As to quaternary structure, heterodimer of 2 subunits, IMMPL1 and IMMPL2.

It is found in the mitochondrion inner membrane. Its function is as follows. Catalyzes the removal of transit peptides required for the targeting of proteins from the mitochondrial matrix, across the inner membrane, into the inter-membrane space. Known to process the nuclear encoded protein DIABLO. The polypeptide is Mitochondrial inner membrane protease subunit 1 (Immp1l) (Mus musculus (Mouse)).